A 428-amino-acid polypeptide reads, in one-letter code: Glutamate-1-semialdehyde 2,1-aminomutase (428 aa).

Residue K267 is modified to N6-(pyridoxal phosphate)lysine.

Belongs to the class-III pyridoxal-phosphate-dependent aminotransferase family. HemL subfamily. In terms of assembly, homodimer. Requires pyridoxal 5'-phosphate as cofactor.

It is found in the cytoplasm. The enzyme catalyses (S)-4-amino-5-oxopentanoate = 5-aminolevulinate. Its pathway is porphyrin-containing compound metabolism; protoporphyrin-IX biosynthesis; 5-aminolevulinate from L-glutamyl-tRNA(Glu): step 2/2. This is Glutamate-1-semialdehyde 2,1-aminomutase from Sulfurihydrogenibium sp. (strain YO3AOP1).